The following is a 501-amino-acid chain: Cytochrome P450 90A4 (501 aa).

A helical transmembrane segment spans residues 2-22 (AAAALLLLAAAAAAVVVAMAL). Cys-446 lines the heme pocket.

The protein belongs to the cytochrome P450 family. The cofactor is heme. Highly expressed in shoot apex and inflorenscence. Expressed in roots, stems, leaf blades and leaf sheaths.

It is found in the cell membrane. It functions in the pathway plant hormone biosynthesis; brassinosteroid biosynthesis. In terms of biological role, catalyzes the C23-alpha-hydroxylation step in brassinosteroid biosynthesis. Converts 6-deoxocathasterone to 6-deoxoteasterone in the late C6-oxidation pathway and cathasterone to teasterone (TE) in the early C6-oxidation pathway of brassinolide (BL) biosynthesis. The polypeptide is Cytochrome P450 90A4 (Oryza sativa subsp. japonica (Rice)).